An 827-amino-acid polypeptide reads, in one-letter code: Probable beta-glucosidase H (827 aa).

Asp-223 is a catalytic residue. In terms of domain architecture, PA14 spans 387-546; that stretch reads RLLTNAVMHF…DSAEMVRSAV (160 aa). Residues Asn-471, Asn-594, Asn-600, and Asn-625 are each glycosylated (N-linked (GlcNAc...) asparagine).

Belongs to the glycosyl hydrolase 3 family.

It localises to the secreted. It catalyses the reaction Hydrolysis of terminal, non-reducing beta-D-glucosyl residues with release of beta-D-glucose.. It functions in the pathway glycan metabolism; cellulose degradation. In terms of biological role, beta-glucosidases are one of a number of cellulolytic enzymes involved in the degradation of cellulosic biomass. Catalyzes the last step releasing glucose from the inhibitory cellobiose. The sequence is that of Probable beta-glucosidase H (bglH) from Aspergillus flavus (strain ATCC 200026 / FGSC A1120 / IAM 13836 / NRRL 3357 / JCM 12722 / SRRC 167).